The following is a 297-amino-acid chain: ER membrane protein complex subunit 2 (297 aa).

Ala2 is subject to N-acetylalanine. 3 TPR repeats span residues 87–120 (HRVK…DPTN), 155–188 (QEAW…NPYN), and 192–225 (CQQY…NNRN). Lys255 bears the N6-acetyllysine mark.

Belongs to the EMC2 family. As to quaternary structure, component of the ER membrane protein complex (EMC).

It localises to the endoplasmic reticulum membrane. Functionally, part of the endoplasmic reticulum membrane protein complex (EMC) that enables the energy-independent insertion into endoplasmic reticulum membranes of newly synthesized membrane proteins. Preferentially accommodates proteins with transmembrane domains that are weakly hydrophobic or contain destabilizing features such as charged and aromatic residues. Involved in the cotranslational insertion of multi-pass membrane proteins in which stop-transfer membrane-anchor sequences become ER membrane spanning helices. It is also required for the post-translational insertion of tail-anchored/TA proteins in endoplasmic reticulum membranes. By mediating the proper cotranslational insertion of N-terminal transmembrane domains in an N-exo topology, with translocated N-terminus in the lumen of the ER, controls the topology of multi-pass membrane proteins like the G protein-coupled receptors. By regulating the insertion of various proteins in membranes, it is indirectly involved in many cellular processes. The sequence is that of ER membrane protein complex subunit 2 from Bos taurus (Bovine).